Reading from the N-terminus, the 340-residue chain is Replication factor C subunit 5 (340 aa).

Met1 carries the N-acetylmethionine modification. 60-67 contributes to the ATP binding site; that stretch reads GPPGTGKT.

Belongs to the activator 1 small subunits family. Subunit of the RFC complex, an heteropentameric complex consisting of a large subunit RFC1 and four small subunits RFC2, RFC3, RFC4 and RFC5; the RFC complex interacts with PCNA. Forms an heterotetrameric complex with RFC2, RFC3 and RFC4; this complex has ATPase activity but is not stimulated by PCNA. The heterotetramer of subunits RFC2, RFC3, RFC4 and RFC5 interacts with RAD17.

The protein resides in the nucleus. Its function is as follows. Subunit of the replication factor C (RFC) complex which acts during elongation of primed DNA templates by DNA polymerases delta and epsilon, and is necessary for ATP-dependent loading of proliferating cell nuclear antigen (PCNA) onto primed DNA. The polypeptide is Replication factor C subunit 5 (RFC5) (Homo sapiens (Human)).